The sequence spans 314 residues: Glycerol-1-phosphate dehydrogenase [NAD(P)+] (314 aa).

Residues 52–56 (GKPLD) and 74–77 (TSAS) contribute to the NAD(+) site. Asp-79 contacts substrate. Ser-83 contacts NAD(+). Asp-131 provides a ligand contact to substrate. The Zn(2+) site is built by Asp-131 and His-211. A substrate-binding site is contributed by His-215. His-231 is a binding site for Zn(2+).

The protein belongs to the glycerol-1-phosphate dehydrogenase family. Requires Zn(2+) as cofactor.

The protein localises to the cytoplasm. It catalyses the reaction sn-glycerol 1-phosphate + NAD(+) = dihydroxyacetone phosphate + NADH + H(+). The catalysed reaction is sn-glycerol 1-phosphate + NADP(+) = dihydroxyacetone phosphate + NADPH + H(+). Its pathway is membrane lipid metabolism; glycerophospholipid metabolism. Its function is as follows. Catalyzes the NAD(P)H-dependent reduction of dihydroxyacetonephosphate (DHAP or glycerone phosphate) to glycerol 1-phosphate (G1P). The G1P thus generated is used as the glycerophosphate backbone of phospholipids in the cellular membranes of Archaea. This chain is Glycerol-1-phosphate dehydrogenase [NAD(P)+], found in Korarchaeum cryptofilum (strain OPF8).